A 295-amino-acid polypeptide reads, in one-letter code: MDLRDLKTFLHLAESRHFGRSARAMHVSPSTLSRQIQRLEEDLGQPLFVRDNRTVTLTEAGEELRVFAQQTLLQYQQLRHTLDQQGPSLSGELHIFCSVTAAYSHLPPILDRFRAEHPSVEIKLTTGDAADAMEKVVTGEADLAIAGKPETLPGAVAFSMLENLAVVLIAPALPCPVRNQVSVDKPDWSTVPFIMADQGPVRRRIELWFRRHKISNPQIYATVGGHEAMVSMVALGCGVALLPEVVLENSPEPVRNRVMILERSDEKTPFELGVCAQKKRLHEPLIDAFWKILPN.

Residues 1–58 (MDLRDLKTFLHLAESRHFGRSARAMHVSPSTLSRQIQRLEEDLGQPLFVRDNRTVTLT) enclose the HTH lysR-type domain. A DNA-binding region (H-T-H motif) is located at residues 18–37 (FGRSARAMHVSPSTLSRQIQ).

It belongs to the LysR transcriptional regulatory family.

The protein resides in the cytoplasm. This protein activates the transcription of the IlvC gene in the presence of acetolactate or acetohydroxybutyrate. IlvY is also a negative regulator of its own expression. The chain is HTH-type transcriptional activator IlvY (ilvY) from Salmonella typhi.